Consider the following 89-residue polypeptide: Cell division protein FtsL (89 aa).

At 1–6 the chain is on the cytoplasmic side; that stretch reads MAMNKL. The chain crosses the membrane as a helical span at residues 7–24; the sequence is NFLLLLAVCVSAFSVVMQ. The Periplasmic segment spans residues 25–89; sequence QNQYRLNFTA…GNTFMVEHQR (65 aa). Residues 33–73 adopt a coiled-coil conformation; sequence TALDKAKKQEIALEQDYAQMRLQQARLANHEAIRAAAEKQN.

This sequence belongs to the FtsL family. In terms of assembly, part of a complex composed of FtsB, FtsL and FtsQ.

It is found in the cell inner membrane. In terms of biological role, essential cell division protein. May link together the upstream cell division proteins, which are predominantly cytoplasmic, with the downstream cell division proteins, which are predominantly periplasmic. The protein is Cell division protein FtsL of Neisseria meningitidis serogroup B (strain ATCC BAA-335 / MC58).